The chain runs to 380 residues: Cytochrome b (380 aa).

Helical transmembrane passes span 34–54 (FGSLLGLCLVSQILTGLFLAM), 78–99 (WLLRNLHANGASFMFICLYMHI), 114–134 (WNIGVMLLVLTMATAFLGYVL), and 179–199 (FFAFHFFLPFMIAGLSVVHLL). Heme b contacts are provided by H84 and H98. Residues H183 and H197 each coordinate heme b. H202 contacts a ubiquinone. Transmembrane regions (helical) follow at residues 227-247 (YKDVVGFVVLLAGLVFIALFS), 289-309 (LGGVVALAMSIVVLFFMPFVH), 321-341 (LAQVLFWLMVVNVLLLTWLGG), and 348-368 (YIFLGQAASVIYFVNILLLIP).

The protein belongs to the cytochrome b family. In terms of assembly, the cytochrome bc1 complex contains 3 respiratory subunits (MT-CYB, CYC1 and UQCRFS1), 2 core proteins (UQCRC1 and UQCRC2) and probably 6 low-molecular weight proteins. Requires heme b as cofactor.

Its subcellular location is the mitochondrion inner membrane. In terms of biological role, component of the ubiquinol-cytochrome c reductase complex (complex III or cytochrome b-c1 complex) that is part of the mitochondrial respiratory chain. The b-c1 complex mediates electron transfer from ubiquinol to cytochrome c. Contributes to the generation of a proton gradient across the mitochondrial membrane that is then used for ATP synthesis. In Branchiostoma floridae (Florida lancelet), this protein is Cytochrome b (MT-CYB).